Consider the following 449-residue polypeptide: Na(+)/H(+) antiporter NhaA 1 (449 aa).

11 consecutive transmembrane segments (helical) span residues 32-52 (IEATSGAVLLLATVVALTLSN), 87-107 (GLMTLFFFIVALEIKREVVLG), 114-134 (MVAFSVVAAAGGMLVPMGLYL), 145-165 (GWGVVMPTDTAFVIGCLALLG), 174-194 (VFLLSLAVVDDLAAILVVAVG), 202-222 (TALALGAVGLVIIRGMALLGV), 233-253 (AIIWLAVNASGIHATIVGVIL), 318-338 (WVAFGVMPLFALANAGVSITI), 347-367 (LAVMAGFVLGKPIGVTAFAWL), 382-402 (WGGLVGGALLTGIGFTMALFI), and 417-437 (LGILAASVVSSVAGLTLLCMF).

It belongs to the NhaA Na(+)/H(+) (TC 2.A.33) antiporter family.

Its subcellular location is the cell inner membrane. The catalysed reaction is Na(+)(in) + 2 H(+)(out) = Na(+)(out) + 2 H(+)(in). In terms of biological role, na(+)/H(+) antiporter that extrudes sodium in exchange for external protons. In Acidiphilium cryptum (strain JF-5), this protein is Na(+)/H(+) antiporter NhaA 1.